The sequence spans 297 residues: Phenylalanine-4-hydroxylase (297 aa).

Fe cation-binding residues include His138, His143, and Glu184.

It belongs to the biopterin-dependent aromatic amino acid hydroxylase family. In terms of assembly, monomer. Requires Fe(2+) as cofactor.

The catalysed reaction is (6R)-L-erythro-5,6,7,8-tetrahydrobiopterin + L-phenylalanine + O2 = (4aS,6R)-4a-hydroxy-L-erythro-5,6,7,8-tetrahydrobiopterin + L-tyrosine. The protein operates within amino-acid degradation; L-phenylalanine degradation; acetoacetate and fumarate from L-phenylalanine: step 1/6. This Chromobacterium violaceum (strain ATCC 12472 / DSM 30191 / JCM 1249 / CCUG 213 / NBRC 12614 / NCIMB 9131 / NCTC 9757 / MK) protein is Phenylalanine-4-hydroxylase (phhA).